A 697-amino-acid chain; its full sequence is Ion-translocating oxidoreductase complex subunit C (697 aa).

2 consecutive 4Fe-4S ferredoxin-type domains span residues 366-397 (AEMG…QQLY) and 407-436 (KARN…VQYY). 8 residues coordinate [4Fe-4S] cluster: Cys-377, Cys-380, Cys-383, Cys-387, Cys-416, Cys-419, Cys-422, and Cys-426. Residues 576-674 (AQLESEPVKS…APEEDPRKAA (99 aa)) are disordered. The span at 581-596 (EPVKSESEAPEEDPRK) shows a compositional bias: basic and acidic residues. Over residues 597–615 (AAVAAAIARVKAKKAAQAQ) the composition is skewed to low complexity. Residues 619 to 634 (EPVKSESEAPEEDPRK) show a composition bias toward basic and acidic residues. Low complexity predominate over residues 635 to 653 (AAVAAAIARVKAKKAAQAQ). Residues 657–672 (EPVKSESEAPEEDPRK) show a composition bias toward basic and acidic residues.

Belongs to the 4Fe4S bacterial-type ferredoxin family. RnfC subfamily. As to quaternary structure, the complex is composed of six subunits: RnfA, RnfB, RnfC, RnfD, RnfE and RnfG. [4Fe-4S] cluster is required as a cofactor.

The protein resides in the cell inner membrane. Functionally, part of a membrane-bound complex that couples electron transfer with translocation of ions across the membrane. This is Ion-translocating oxidoreductase complex subunit C from Yersinia enterocolitica serotype O:8 / biotype 1B (strain NCTC 13174 / 8081).